Consider the following 942-residue polypeptide: DDB1- and CUL4-associated factor 5 (942 aa).

WD repeat units lie at residues 51-91 (GHFG…HSRV), 99-139 (EHHS…LDVF), 140-180 (AHED…HGEP), 185-225 (NYPS…SSLL), 277-317 (FNSC…EAGG), and 331-370 (GHRSIVNQVRFNPHTYMICSSGVEKIIKIWSPYKQPGCTG). Disordered regions lie at residues 449–478 (GVSERSGYTDSESSASLPRSPPPTVDESAD) and 490–509 (TTNTVASTPPTPTCEDAASR). Residues 454–465 (SGYTDSESSASL) are compositionally biased toward polar residues. Residue Thr-500 is modified to Phosphothreonine. Phosphoserine is present on residues Ser-531, Ser-533, Ser-626, Ser-628, Ser-645, Ser-648, and Ser-651. 3 disordered regions span residues 544 to 655 (TDLF…DIES), 676 to 824 (NNKD…EERS), and 889 to 942 (ACET…KLKT). A compositionally biased stretch (low complexity) spans 625–641 (LSSSPTSSPERSTSTLE). Composition is skewed to basic and acidic residues over residues 690–701 (DEGRAGTSHKDN) and 728–738 (CSKDTFKEETP). Residues 760 to 770 (GTSQDTGNSGS) show a composition bias toward polar residues. Phosphoserine is present on Ser-794. The span at 801–815 (SGSTLNSGSGNCPRT) shows a compositional bias: polar residues.

Interacts with DDB1, CUL4A or CUL4B. Interacts with L3MBTL3. Interacts with DNMT1. Interacts with E2F1. Interacts with SOX2. As to expression, ubiquitous.

Its pathway is protein modification; protein ubiquitination. In terms of biological role, is a substrate receptor for the CUL4-DDB1 E3 ubiquitin-protein ligase complex (CRL4). The complex CRL4-DCAF5 is involved in the ubiquitination of a set of methylated non-histone proteins, including SOX2, DNMT1 and E2F1. The chain is DDB1- and CUL4-associated factor 5 (DCAF5) from Homo sapiens (Human).